The following is a 342-amino-acid chain: MSDLKTRFLEVYSVLKSELLNDPAFEFTDDSRQWVERMLDYNVPGGKLNRGLSVIDSYKLLKEGKELSDDEIFLSSALGWCIEWLQAYFLVLDDIMDSSHTRRGQPCWFRLPKVGMIAVNDGILLRNHIPRILKKHFRQKPYYVDLLDLFNEVEFQTASGQMIDLITTLVGEKDLSKYSLPIHRRIVQYKTAYYSFYLPVACALLMSGEDLEKHTNVKDILIEMGTYFQVQDDYLDCFGAPEVIGKIGTDIEDFKCSWLVVKALELSNEEQKKFLHENYGKDDPASVAKVKELYNTLKLQDVFAEYESKSYDKLIKFIEAHPSQAVQAVLKSFLGKIYKRQK.

Residues K47, R50, and Q86 each contribute to the isopentenyl diphosphate site. Mg(2+) contacts are provided by D93 and D97. R102 is a dimethylallyl diphosphate binding site. An isopentenyl diphosphate-binding site is contributed by R103. The dimethylallyl diphosphate site is built by K190, T191, Q229, K246, and K255.

It belongs to the FPP/GGPP synthase family. Homodimer. Mg(2+) serves as cofactor. Mostly expressed in roots and seeds, and to a lower extent, in leaves and stems.

It is found in the cytoplasm. The enzyme catalyses isopentenyl diphosphate + dimethylallyl diphosphate = (2E)-geranyl diphosphate + diphosphate. It carries out the reaction isopentenyl diphosphate + (2E)-geranyl diphosphate = (2E,6E)-farnesyl diphosphate + diphosphate. It participates in isoprenoid biosynthesis; farnesyl diphosphate biosynthesis; farnesyl diphosphate from geranyl diphosphate and isopentenyl diphosphate: step 1/1. The protein operates within isoprenoid biosynthesis; geranyl diphosphate biosynthesis; geranyl diphosphate from dimethylallyl diphosphate and isopentenyl diphosphate: step 1/1. With respect to regulation, stimulated by methyl jasmonate (MeJA). Functionally, catalyzes the sequential condensation of isopentenyl pyrophosphate with the allylic pyrophosphates, dimethylallyl pyrophosphate, and then with the resultant geranylpyrophosphate to the ultimate product farnesyl pyrophosphate. Component of the triterpene saponins (e.g. ginsenosides or panaxosides) and phytosterols biosynthetic pathways. Promotes the accumulation of ginsenosides. This Panax ginseng (Korean ginseng) protein is Farnesyl pyrophosphate synthase.